The sequence spans 346 residues: Uroporphyrinogen decarboxylase (346 aa).

Residues 23 to 27, aspartate 72, tyrosine 155, serine 209, and histidine 322 contribute to the substrate site; that span reads RQAGR.

Belongs to the uroporphyrinogen decarboxylase family. In terms of assembly, homodimer.

The protein localises to the cytoplasm. It carries out the reaction uroporphyrinogen III + 4 H(+) = coproporphyrinogen III + 4 CO2. It participates in porphyrin-containing compound metabolism; protoporphyrin-IX biosynthesis; coproporphyrinogen-III from 5-aminolevulinate: step 4/4. Its function is as follows. Catalyzes the decarboxylation of four acetate groups of uroporphyrinogen-III to yield coproporphyrinogen-III. The protein is Uroporphyrinogen decarboxylase of Anaeromyxobacter dehalogenans (strain 2CP-C).